The following is a 144-amino-acid chain: Nucleoside diphosphate kinase (144 aa).

Positions 9, 57, 85, 91, 102, and 112 each coordinate ATP. The active-site Pros-phosphohistidine intermediate is H120.

Belongs to the NDK family. In terms of assembly, homotetramer. Mg(2+) is required as a cofactor.

Its subcellular location is the cytoplasm. It catalyses the reaction a 2'-deoxyribonucleoside 5'-diphosphate + ATP = a 2'-deoxyribonucleoside 5'-triphosphate + ADP. It carries out the reaction a ribonucleoside 5'-diphosphate + ATP = a ribonucleoside 5'-triphosphate + ADP. Functionally, major role in the synthesis of nucleoside triphosphates other than ATP. The ATP gamma phosphate is transferred to the NDP beta phosphate via a ping-pong mechanism, using a phosphorylated active-site intermediate. This Streptococcus uberis (strain ATCC BAA-854 / 0140J) protein is Nucleoside diphosphate kinase.